The chain runs to 208 residues: Uracil phosphoribosyltransferase (208 aa).

5-phospho-alpha-D-ribose 1-diphosphate contacts are provided by residues arginine 78, arginine 103, and 130 to 138 (DPMLATGGS). Residues isoleucine 193 and 198–200 (GDA) each bind uracil. Aspartate 199 contacts 5-phospho-alpha-D-ribose 1-diphosphate.

Belongs to the UPRTase family. Mg(2+) is required as a cofactor.

It catalyses the reaction UMP + diphosphate = 5-phospho-alpha-D-ribose 1-diphosphate + uracil. Its pathway is pyrimidine metabolism; UMP biosynthesis via salvage pathway; UMP from uracil: step 1/1. With respect to regulation, allosterically activated by GTP. Its function is as follows. Catalyzes the conversion of uracil and 5-phospho-alpha-D-ribose 1-diphosphate (PRPP) to UMP and diphosphate. The chain is Uracil phosphoribosyltransferase from Haemophilus influenzae (strain PittEE).